Consider the following 120-residue polypeptide: MERHQHLLSEYQQILTLSEQMLVLATEGNWDALVDLEMTYLKAVESTANITISSCSSLMLQDLLREKLRAILDNEIEIKRLLQLRLDRLSDLVGQSTKQQAVNNTYGQFPDHALLLGETQ.

A required for homodimerization region spans residues Met1 to Ile50. The interval Leu60 to Lys98 is fliD binding.

The protein belongs to the FliT family. In terms of assembly, homodimer. Interacts with FliD and FlhC.

The protein resides in the cytoplasm. Its subcellular location is the cytosol. Functionally, dual-function protein that regulates the transcription of class 2 flagellar operons and that also acts as an export chaperone for the filament-capping protein FliD. As a transcriptional regulator, acts as an anti-FlhDC factor; it directly binds FlhC, thus inhibiting the binding of the FlhC/FlhD complex to class 2 promoters, resulting in decreased expression of class 2 flagellar operons. As a chaperone, effects FliD transition to the membrane by preventing its premature polymerization, and by directing it to the export apparatus. The protein is Flagellar protein FliT of Yersinia enterocolitica serotype O:8 / biotype 1B (strain NCTC 13174 / 8081).